The chain runs to 370 residues: Aminomethyltransferase (370 aa).

The protein belongs to the GcvT family. In terms of assembly, the glycine cleavage system is composed of four proteins: P, T, L and H.

The catalysed reaction is N(6)-[(R)-S(8)-aminomethyldihydrolipoyl]-L-lysyl-[protein] + (6S)-5,6,7,8-tetrahydrofolate = N(6)-[(R)-dihydrolipoyl]-L-lysyl-[protein] + (6R)-5,10-methylene-5,6,7,8-tetrahydrofolate + NH4(+). Functionally, the glycine cleavage system catalyzes the degradation of glycine. The polypeptide is Aminomethyltransferase (Clostridium botulinum (strain Langeland / NCTC 10281 / Type F)).